We begin with the raw amino-acid sequence, 336 residues long: MSGTKELYDVTLIGAGPTGLFGVFYAGMRGMKTKVIEALPEVGGQLAALYPEKDIFDVAGFPRISAKRLVEQCKEQADSANPDATYVFNQRVDKLNRLEDGTFELVTHTGERHYSKAVIITAGIGAFEPNRIPNESARQYEGKGVFYSVTNLPQFEGKRVLVIGGGDSAVDYALMVEPIAAEVTLIHRRDGFRAHEESLKKLAASRVHVKVFYELRRVEGDGNWVKKATIFDNRTGEETTIDVDCVIIGTGFKASLGSMLEWGLEIENKRQIVVNSKGETNIPGVYAAGDICWYPGKIRLIATGFGEVATAVNNAKAFIDPGSAAFPGHSSEQRNK.

8 residues coordinate FAD: Thr-18, Glu-37, Gln-45, Tyr-50, Val-92, Phe-127, Asp-290, and Ser-331.

The protein belongs to the ferredoxin--NADP reductase type 2 family. As to quaternary structure, homodimer. The cofactor is FAD.

It catalyses the reaction 2 reduced [2Fe-2S]-[ferredoxin] + NADP(+) + H(+) = 2 oxidized [2Fe-2S]-[ferredoxin] + NADPH. The polypeptide is Ferredoxin--NADP reductase (Symbiobacterium thermophilum (strain DSM 24528 / JCM 14929 / IAM 14863 / T)).